The chain runs to 348 residues: Phospho-2-dehydro-3-deoxyheptonate aldolase, Trp-sensitive (348 aa).

This sequence belongs to the class-I DAHP synthase family.

It catalyses the reaction D-erythrose 4-phosphate + phosphoenolpyruvate + H2O = 7-phospho-2-dehydro-3-deoxy-D-arabino-heptonate + phosphate. It functions in the pathway metabolic intermediate biosynthesis; chorismate biosynthesis; chorismate from D-erythrose 4-phosphate and phosphoenolpyruvate: step 1/7. Functionally, stereospecific condensation of phosphoenolpyruvate (PEP) and D-erythrose-4-phosphate (E4P) giving rise to 3-deoxy-D-arabino-heptulosonate-7-phosphate (DAHP). The sequence is that of Phospho-2-dehydro-3-deoxyheptonate aldolase, Trp-sensitive (aroH) from Buchnera aphidicola subsp. Baizongia pistaciae (strain Bp).